A 111-amino-acid polypeptide reads, in one-letter code: uncharacterized protein (111 aa).

It localises to the cytoplasm. Its subcellular location is the nucleus. This is an uncharacterized protein from Saccharomyces cerevisiae (strain ATCC 204508 / S288c) (Baker's yeast).